Consider the following 291-residue polypeptide: MLQGSLVALITPMNQDGSIHYEQLRDLIDWHIENGTDGIVAVGTTGESATLSVEEHTAVIEAVVKHVAKRVPVIAGTGANNTVEAIALSQAAEKAGADYTLSVVPYYNKPSQEGIYQHFKTIAEATSIPMIIYNVPGRTVVSMTNDTILRLAEIPNIVGVKEASGNIGSNIELINRAPEGFVVLSGDDHTALPFMLCGGHGVITVAANAAPKLFADMCRAALQGDIALARELNDRLIPIYDTMFCEPSPAAPKWAVSALGRCEPHVRLPLVPLTENGQAKVRAALKASGQL.

Position 45 (threonine 45) interacts with pyruvate. The active-site Proton donor/acceptor is the tyrosine 133. Residue lysine 161 is the Schiff-base intermediate with substrate of the active site. Pyruvate is bound at residue isoleucine 203.

This sequence belongs to the DapA family. In terms of assembly, homotetramer.

Its subcellular location is the cytoplasm. The enzyme catalyses L-aspartate 4-semialdehyde + pyruvate = (2S,4S)-4-hydroxy-2,3,4,5-tetrahydrodipicolinate + H2O + H(+). The protein operates within amino-acid biosynthesis; L-lysine biosynthesis via DAP pathway; (S)-tetrahydrodipicolinate from L-aspartate: step 3/4. Is allosterically feedback inhibited by lysine; the N.meningitidis enzyme is significantly more sensitive to lysine than the E.coli enzyme. Shows substrate inhibition by (S)-ASA, with a Ki of 1.7 mM. Catalyzes the condensation of (S)-aspartate-beta-semialdehyde [(S)-ASA] and pyruvate to 4-hydroxy-tetrahydrodipicolinate (HTPA). This is 4-hydroxy-tetrahydrodipicolinate synthase from Neisseria meningitidis serogroup B (strain ATCC BAA-335 / MC58).